Reading from the N-terminus, the 376-residue chain is Geranylgeranyl transferase type-1 subunit beta (376 aa).

4 PFTB repeats span residues 128–179 (KRSL…YICG), 192–231 (TEKLLGYIMSQQCYNGAFGAHNEPHSGYTSCALSTLALLS), 259–301 (MKFE…HLLT), and 310–353 (TELV…ALIE). Residues 216-218 (HSG) and 280-283 (RENK) each bind geranylgeranyl diphosphate. Zn(2+)-binding residues include aspartate 286 and cysteine 288. 289 to 292 (YAFW) is a geranylgeranyl diphosphate binding site. Histidine 341 lines the Zn(2+) pocket.

This sequence belongs to the protein prenyltransferase subunit beta family. As to quaternary structure, heterodimer of an alpha (RAM2) and a beta (CDC43) subunit. Zn(2+) is required as a cofactor. Requires Mg(2+) as cofactor.

The protein localises to the cytoplasm. The enzyme catalyses geranylgeranyl diphosphate + L-cysteinyl-[protein] = S-geranylgeranyl-L-cysteinyl-[protein] + diphosphate. In terms of biological role, catalyzes the transfer of a geranyl-geranyl moiety from geranyl-geranyl diphosphate to proteins having the C-terminal sequence Cys-Ile-Ile-Leu or Cys-Val-Leu-Leu. Acts, among other substrates, on Rho1 and Rho2 and CDC42 proteins. Participates in a RAS-like C-terminal modification of proteins involved in nuclear division and bud growth. It is involved in bud positioning and cell polarity. The beta subunit is responsible for isoprenoid and peptide-binding. In Saccharomyces cerevisiae (strain ATCC 204508 / S288c) (Baker's yeast), this protein is Geranylgeranyl transferase type-1 subunit beta (CDC43).